We begin with the raw amino-acid sequence, 620 residues long: E3 ubiquitin-protein ligase AMFR (620 aa).

The next 7 helical transmembrane spans lie at Leu75–Ile95, Phe115–Val135, Val138–Cys158, Val179–Leu199, Gly201–Val221, Ser247–Met267, and His269–Met289. The RING-type; atypical zinc finger occupies Cys334–Arg372. Residues Gln449–Ile491 form the CUE domain. A compositionally biased stretch (low complexity) spans Ala510 to Pro526. Disordered stretches follow at residues Ala510–Glu544 and Pro569–Thr598. Residues Phe531 to Glu544 are compositionally biased toward basic and acidic residues. Positions Asp581–Asp595 are enriched in acidic residues.

As to expression, widely expressed.

The protein resides in the endoplasmic reticulum membrane. The enzyme catalyses [E2 ubiquitin-conjugating enzyme]-S-ubiquitinyl-L-cysteine + [acceptor protein]-L-cysteine = [E2 ubiquitin-conjugating enzyme]-L-cysteine + [acceptor protein]-S-ubiquitinyl-L-cysteine.. It functions in the pathway protein modification; protein ubiquitination. Functionally, E3 ubiquitin-protein ligase that mediates the polyubiquitination of lysine and cysteine residues on target proteins. May participate in the final step of endoplasmic reticulum-associated degradation (ERAD). Required for proper lipid homeostasis. The sequence is that of E3 ubiquitin-protein ligase AMFR from Danio rerio (Zebrafish).